A 185-amino-acid polypeptide reads, in one-letter code: Large ribosomal subunit protein bL25 (185 aa).

This sequence belongs to the bacterial ribosomal protein bL25 family. CTC subfamily. In terms of assembly, part of the 50S ribosomal subunit; part of the 5S rRNA/L5/L18/L25 subcomplex. Contacts the 5S rRNA. Binds to the 5S rRNA independently of L5 and L18.

Its function is as follows. This is one of the proteins that binds to the 5S RNA in the ribosome where it forms part of the central protuberance. This is Large ribosomal subunit protein bL25 from Microcystis aeruginosa (strain NIES-843 / IAM M-2473).